Reading from the N-terminus, the 102-residue chain is MAKQKIRIRLKAYDHRIIDQSAEKIVETAKRSGAEVSGPIPLPTEKTVYTIIRAVHKYKDSREQFEQRTHKRLIDIVNPTPKTVDALMGLNLPSGVDIEIKL.

The protein belongs to the universal ribosomal protein uS10 family. In terms of assembly, part of the 30S ribosomal subunit.

In terms of biological role, involved in the binding of tRNA to the ribosomes. This is Small ribosomal subunit protein uS10 from Macrococcus caseolyticus (strain JCSC5402) (Macrococcoides caseolyticum).